Here is a 427-residue protein sequence, read N- to C-terminus: Serine--tRNA ligase (427 aa).

235 to 237 (TAE) contributes to the L-serine binding site. ATP-binding positions include 266–268 (RRE) and Val-282. Glu-289 is a binding site for L-serine. 353-356 (EASS) contacts ATP. Ser-389 is an L-serine binding site.

The protein belongs to the class-II aminoacyl-tRNA synthetase family. Type-1 seryl-tRNA synthetase subfamily. As to quaternary structure, homodimer. The tRNA molecule binds across the dimer.

It localises to the cytoplasm. It carries out the reaction tRNA(Ser) + L-serine + ATP = L-seryl-tRNA(Ser) + AMP + diphosphate + H(+). The catalysed reaction is tRNA(Sec) + L-serine + ATP = L-seryl-tRNA(Sec) + AMP + diphosphate + H(+). It functions in the pathway aminoacyl-tRNA biosynthesis; selenocysteinyl-tRNA(Sec) biosynthesis; L-seryl-tRNA(Sec) from L-serine and tRNA(Sec): step 1/1. Its function is as follows. Catalyzes the attachment of serine to tRNA(Ser). Is also able to aminoacylate tRNA(Sec) with serine, to form the misacylated tRNA L-seryl-tRNA(Sec), which will be further converted into selenocysteinyl-tRNA(Sec). The polypeptide is Serine--tRNA ligase (Chlorobaculum parvum (strain DSM 263 / NCIMB 8327) (Chlorobium vibrioforme subsp. thiosulfatophilum)).